We begin with the raw amino-acid sequence, 788 residues long: Elongator complex protein 2 (788 aa).

8 WD repeats span residues 13–51 (GANKQTQVSDIHKVKKIVAFGAGKTIALWDPIEPNNKGV), 57–96 (GHEAEVTCVRFVPDSDFMVSASEDHHVKIWKFTDYSHLQC), 102–139 (HYSKTIVALSALPSLISVGCADGTISIWRQNIQNDEFG), 200–243 (GHED…LIDD), 279–318 (GHDDWISSLQWHESRLQLLAATADTSLMVWEPDETSGIWV), 336–377 (GSSG…ICDQ), 383–422 (GATKDVTDIAWSPSGEYLLATSLDQTTRLFAPWIYDASGR), and 437–475 (IHGYDMICVETVTDTRFVSGGDEKILRSFDLPKGVAGML). Positions 490–530 (PDSATVPVLGLSNKAGEDDANEDDEEEEGGNKETPDITDPL) are disordered. S492 bears the Phosphoserine mark. A compositionally biased stretch (acidic residues) spans 507-517 (DDANEDDEEEE). 5 WD repeats span residues 556–600 (GHGF…EIKP), 604–643 (FHSLTITRLKFSKDGKFLLSVCRDRKWALWERNMEDNTFE), 651–692 (PHTR…ADDY), 699–742 (KHTK…FELI), and 750–788 (TPADKITRLRWSHLKRNGKLFLGVGSSDLSTRIYSLAYE).

Belongs to the WD repeat ELP2 family. As to quaternary structure, component of the elongator complex which consists of ELP1/IKI3, ELP2, ELP3, ELP4, ELP5/IKI1 and ELP6. The elongator complex is composed of two copies of the Elp123 subcomplex (composed of ELP1/IKI3, ELP2 and ELP3) and two copies of the Elp456 subcomplex (composed of ELP4, ELP5/IKI1 and ELP6). The Elp123 subcomplex forms a two-lobed scaffold, which binds the Elp456 subcomplex asymmetrically. In the complex, ELP2 interacts with ELP1/IKI3. In each lobe, ELP2 is tightly sandwiched between ELP1/IKI3 and ELP3. The Elp123 subcomplex binds tRNA through ELP1/IKI3 and ELP3 and can bind 2 tRNAs simultaneously. tRNA-binding induces conformational rearrangements which precisely position the targeted anticodon base in the active site. The Elp456 subcomplex binds tRNA and has ATPase activity. Interacts with KTI11/DPH3.

The protein resides in the cytoplasm. Its subcellular location is the nucleus. It participates in tRNA modification; 5-methoxycarbonylmethyl-2-thiouridine-tRNA biosynthesis. Functionally, component of the elongator complex, a multiprotein complex which is required for multiple tRNA modifications, including mcm5U (5-methoxycarbonylmethyl uridine), mcm5s2U (5-methoxycarbonylmethyl-2-thiouridine), and ncm5U (5-carbamoylmethyl uridine). The elongator complex catalyzes formation of carboxymethyluridine in the wobble base at position 34 in tRNAs. It functions as a gamma-toxin target (TOT); disruption of the complex confers resistance to Kluyveromyces lactis toxin zymocin (pGKL1 killer toxin). May also be involved in sensitivity to Pichia inositovora toxin. ELP2 binds to microtubules. Independently, ELP2 may be involved in polarized exocytosis. In Saccharomyces cerevisiae (strain ATCC 204508 / S288c) (Baker's yeast), this protein is Elongator complex protein 2 (ELP2).